Reading from the N-terminus, the 430-residue chain is Adenylosuccinate synthetase (430 aa).

Residues 12–18 (GDEGKGK) and 40–42 (GHT) contribute to the GTP site. Residue Asp-13 is the Proton acceptor of the active site. Residues Asp-13 and Gly-40 each contribute to the Mg(2+) site. IMP-binding positions include 13–16 (DEGK), 38–41 (NAGH), Thr-128, Arg-142, Gln-223, Thr-238, and Arg-302. Residue His-41 is the Proton donor of the active site. Substrate is bound at residue 298-304 (VNTGRKR). Residues Arg-304, 330–332 (KLD), and 412–414 (GVG) contribute to the GTP site.

It belongs to the adenylosuccinate synthetase family. As to quaternary structure, homodimer. Mg(2+) is required as a cofactor.

Its subcellular location is the cytoplasm. It carries out the reaction IMP + L-aspartate + GTP = N(6)-(1,2-dicarboxyethyl)-AMP + GDP + phosphate + 2 H(+). Its pathway is purine metabolism; AMP biosynthesis via de novo pathway; AMP from IMP: step 1/2. Its function is as follows. Plays an important role in the de novo pathway of purine nucleotide biosynthesis. Catalyzes the first committed step in the biosynthesis of AMP from IMP. The protein is Adenylosuccinate synthetase of Corynebacterium aurimucosum (strain ATCC 700975 / DSM 44827 / CIP 107346 / CN-1) (Corynebacterium nigricans).